The following is a 233-amino-acid chain: Ribosomal RNA-processing protein 14-C (233 aa).

The stretch at 32–65 (DRALLLQRRKEKAKARAEAKKLAKKESKAKQESK) forms a coiled coil. Residues 47–64 (RAEAKKLAKKESKAKQES) show a composition bias toward basic and acidic residues. 3 disordered regions span residues 47–87 (RAEA…DNHK), 130–149 (KRRI…ESDK), and 164–233 (DNEQ…SKKK). Residue serine 75 is modified to Phosphoserine. A coiled-coil region spans residues 122–223 (ALKHLEAKKR…ESKKSKKGKA (102 aa)). Basic and acidic residues-rich tracts occupy residues 133–149 (IESM…ESDK) and 180–209 (KKKS…EENL). A compositionally biased stretch (basic residues) spans 210–233 (KKRRESKKSKKGKAPKKKKPSKKK).

Belongs to the SURF6 family. As to quaternary structure, component of the 90S and 60S pre-ribosomal particles.

It is found in the nucleus. Its subcellular location is the nucleolus. Involved in ribosome biogenesis and cell polarity. Required for the synthesis of both 40S and 60S ribosomal subunits and may also play some direct role in correct positioning of the mitotic spindle during mitosis. The sequence is that of Ribosomal RNA-processing protein 14-C (rrp14c) from Schizosaccharomyces pombe (strain 972 / ATCC 24843) (Fission yeast).